A 275-amino-acid chain; its full sequence is Translation initiation factor 2 subunit alpha (275 aa).

Residues 12–83 form the S1 motif domain; it reads GELVVATVKR…KKGHIDLSLR (72 aa).

Belongs to the eIF-2-alpha family. In terms of assembly, heterotrimer composed of an alpha, a beta and a gamma chain.

Functionally, eIF-2 functions in the early steps of protein synthesis by forming a ternary complex with GTP and initiator tRNA. This is Translation initiation factor 2 subunit alpha from Pyrococcus furiosus (strain ATCC 43587 / DSM 3638 / JCM 8422 / Vc1).